Here is a 549-residue protein sequence, read N- to C-terminus: Probable glucomannan 4-beta-mannosyltransferase 4 (549 aa).

A helical membrane pass occupies residues 35-55 (VAPVLQFAVWACMAMSVMLVL). Asp151 is a catalytic residue. Residues Asp210 and Asp212 each coordinate substrate. Residue Asp304 is part of the active site. 4 helical membrane passes run 383–403 (VVAPILTFLFYCVVIPLSVMV), 406–426 (VSIPVWGMVYIPTAITIMNAI), 497–517 (IYIPELMVAFYLLVCASYDLV), and 523–543 (YYLYIYLQAFAFIALGFGFAG).

It belongs to the glycosyltransferase 2 family. Plant cellulose synthase-like A subfamily.

Its subcellular location is the golgi apparatus membrane. The catalysed reaction is GDP-mannose + (glucomannan)n = GDP + (glucomannan)n+1.. Probable mannan synthase which consists of a 4-beta-mannosyltransferase activity on mannan using GDP-mannose. The beta-1,4-mannan product is the backbone for galactomannan synthesis by galactomannan galactosyltransferase. Galactomannan is a noncellulosic polysaccharides of plant cell wall. The sequence is that of Probable glucomannan 4-beta-mannosyltransferase 4 from Oryza sativa subsp. japonica (Rice).